Here is a 256-residue protein sequence, read N- to C-terminus: NAD-dependent protein deacetylase (256 aa).

Residues 1-254 (MDISYHEKIS…KDILDVIKSE (254 aa)) enclose the Deacetylase sirtuin-type domain. Residues Ala-28, Thr-32, Phe-39, Arg-40, Gln-105, Ile-107, Asp-108, and His-123 each coordinate NAD(+). Residue Phe-39 participates in nicotinamide binding. Nicotinamide-binding residues include Ile-107 and Asp-108. Catalysis depends on His-123, which acts as the Proton acceptor. Residues Cys-131, Cys-134, Cys-156, and Cys-159 each contribute to the Zn(2+) site. Thr-197, Ser-198, and Asn-222 together coordinate NAD(+).

Belongs to the sirtuin family. Class U subfamily. Zn(2+) serves as cofactor.

The protein localises to the cytoplasm. It catalyses the reaction N(6)-acetyl-L-lysyl-[protein] + NAD(+) + H2O = 2''-O-acetyl-ADP-D-ribose + nicotinamide + L-lysyl-[protein]. In terms of biological role, NAD-dependent protein deacetylase which modulates the activities of several enzymes which are inactive in their acetylated form. The protein is NAD-dependent protein deacetylase of Thermodesulfovibrio yellowstonii (strain ATCC 51303 / DSM 11347 / YP87).